The primary structure comprises 299 residues: Protease HtpX homolog (299 aa).

2 consecutive transmembrane segments (helical) span residues 14–34 and 39–59; these read IVLL…VGYL and LVGG…SMIF. Zn(2+) is bound at residue His-143. The active site involves Glu-144. Residue His-147 participates in Zn(2+) binding. 2 helical membrane passes run 158-178 and 198-218; these read IAVA…RMMW and IILL…ASLV. Glu-227 serves as a coordination point for Zn(2+).

Belongs to the peptidase M48B family. It depends on Zn(2+) as a cofactor.

The protein resides in the cell membrane. In Streptococcus mutans serotype c (strain ATCC 700610 / UA159), this protein is Protease HtpX homolog.